A 365-amino-acid chain; its full sequence is Poly(rC)-binding protein 2 (365 aa).

2 consecutive KH domains span residues 13–75 (TLTI…FAMI) and 97–162 (PVTL…VKQI). Residue Lys115 forms a Glycyl lysine isopeptide (Lys-Gly) (interchain with G-Cter in SUMO2) linkage. Ser173 carries the phosphoserine modification. Residue Lys185 forms a Glycyl lysine isopeptide (Lys-Gly) (interchain with G-Cter in SUMO2) linkage. A phosphoserine mark is found at Ser189 and Ser272. Residues 287–351 (TTSHELTIPN…ASISLAQYLI (65 aa)) enclose the KH 3 domain. Lys322 is covalently cross-linked (Glycyl lysine isopeptide (Lys-Gly) (interchain with G-Cter in SUMO2)). Phosphoserine occurs at positions 364 and 365.

In terms of assembly, identified in a mRNP complex, at least composed of DHX9, DDX3X, ELAVL1, HNRNPU, IGF2BP1, ILF3, PABPC1, PCBP2, PTBP2, STAU1, STAU2, SYNCRIP and YBX1. Interacts with IFIH1 and RNF135. Interacts with MAVS (via C-terminus) and ITCH (via WW domains). Interacts with CGAS; preventing the formation of liquid-like droplets in which CGAS is activated. Phosphorylated. The non-phosphorylated form(s) exhibited the strongest poly(rC)-binding activity. Post-translationally, (Microbial infection) Proteolytically cleaved by picornavirus proteinase 3CD. Detected in all tissues examined.

It is found in the nucleus. It localises to the cytoplasm. Functionally, single-stranded nucleic acid binding protein that binds preferentially to oligo dC. Major cellular poly(rC)-binding protein. Also binds poly(rU). Acts as a negative regulator of antiviral signaling. Negatively regulates cellular antiviral responses mediated by MAVS signaling. It acts as an adapter between MAVS and the E3 ubiquitin ligase ITCH, therefore triggering MAVS ubiquitination and degradation. Negativeley regulates the cGAS-STING pathway via interaction with CGAS, preventing the formation of liquid-like droplets in which CGAS is activated. Together with PCBP1, required for erythropoiesis, possibly by regulating mRNA splicing. In terms of biological role, (Microbial infection) In case of infection by poliovirus, binds to the viral internal ribosome entry site (IRES) and stimulates the IRES-mediated translation. Also plays a role in initiation of viral RNA replication in concert with the viral protein 3CD. The chain is Poly(rC)-binding protein 2 from Homo sapiens (Human).